The primary structure comprises 955 residues: UPF0182 protein PMT_0755 (955 aa).

A run of 9 helical transmembrane segments spans residues 25-45, 58-78, 107-127, 146-166, 178-198, 214-234, 264-284, 313-333, and 340-360; these read LLLSIAAFCLLMRVQVEWLWF, WLWQLGGLLLALLVVATCQLW, LLGCFVVVVGDLVLLSRLAWL, IWALVIPLSCVFISICVMLGN, CFCFSISIARGWGLWALALAI, FGLGQFPALAFALVVLLAQLI, CNFLRPLIGIILLTLSALLWL, SLASLAILVFAFLVIPFTWIQ, and LIASIIGVGAILLEVLLAPFV.

It belongs to the UPF0182 family.

It is found in the cell membrane. The protein is UPF0182 protein PMT_0755 of Prochlorococcus marinus (strain MIT 9313).